The sequence spans 196 residues: Fe/S biogenesis protein NfuA (196 aa).

The [4Fe-4S] cluster site is built by Cys-154 and Cys-157.

The protein belongs to the NfuA family. Homodimer. It depends on [4Fe-4S] cluster as a cofactor.

Functionally, involved in iron-sulfur cluster biogenesis. Binds a 4Fe-4S cluster, can transfer this cluster to apoproteins, and thereby intervenes in the maturation of Fe/S proteins. Could also act as a scaffold/chaperone for damaged Fe/S proteins. The chain is Fe/S biogenesis protein NfuA from Blochmanniella pennsylvanica (strain BPEN).